Here is a 473-residue protein sequence, read N- to C-terminus: Ribulose bisphosphate carboxylase large chain (473 aa).

Substrate contacts are provided by Asn-116 and Thr-166. The active-site Proton acceptor is Lys-168. Lys-170 is a binding site for substrate. Residues Lys-194, Asp-196, and Glu-197 each contribute to the Mg(2+) site. Lys-194 bears the N6-carboxylysine mark. His-287 serves as the catalytic Proton acceptor. 3 residues coordinate substrate: Arg-288, His-320, and Ser-372.

Belongs to the RuBisCO large chain family. Type I subfamily. Heterohexadecamer of 8 large chains and 8 small chains. It depends on Mg(2+) as a cofactor.

The catalysed reaction is 2 (2R)-3-phosphoglycerate + 2 H(+) = D-ribulose 1,5-bisphosphate + CO2 + H2O. It catalyses the reaction D-ribulose 1,5-bisphosphate + O2 = 2-phosphoglycolate + (2R)-3-phosphoglycerate + 2 H(+). RuBisCO catalyzes two reactions: the carboxylation of D-ribulose 1,5-bisphosphate, the primary event in carbon dioxide fixation, as well as the oxidative fragmentation of the pentose substrate. Both reactions occur simultaneously and in competition at the same active site. In Nitrosomonas eutropha (strain DSM 101675 / C91 / Nm57), this protein is Ribulose bisphosphate carboxylase large chain.